Consider the following 204-residue polypeptide: MSSILLLTSSPRADSLSTPIAVDLAEKLKSQNPGSVVVRRDLAANPLPHIDDLFTGAIRKPPEARTAEETVAVKTSDELVNELLAADTIVISTGLINFNIYSSLKTWIDNVARAGLTFKYTESGPVGLATGKKVYVVLASGGVYSQGPAAPLNHAVPYLKSVLGFLGISDIETIYVEGLAFGPEAAEKAIDAAKSRVQEIALAA.

FMN contacts are provided by residues Ser10 and 15 to 17 (SLS).

Belongs to the azoreductase type 1 family. In terms of assembly, homodimer. The cofactor is FMN.

It carries out the reaction 2 a quinone + NADH + H(+) = 2 a 1,4-benzosemiquinone + NAD(+). The enzyme catalyses N,N-dimethyl-1,4-phenylenediamine + anthranilate + 2 NAD(+) = 2-(4-dimethylaminophenyl)diazenylbenzoate + 2 NADH + 2 H(+). Functionally, quinone reductase that provides resistance to thiol-specific stress caused by electrophilic quinones. In terms of biological role, also exhibits azoreductase activity. Catalyzes the reductive cleavage of the azo bond in aromatic azo compounds to the corresponding amines. The protein is FMN-dependent NADH:quinone oxidoreductase of Rhizobium johnstonii (strain DSM 114642 / LMG 32736 / 3841) (Rhizobium leguminosarum bv. viciae).